An 870-amino-acid chain; its full sequence is NEDD4-like E3 ubiquitin-protein ligase WWP2 (870 aa).

The 117-residue stretch at 1-117 (MASASSSRAG…KNNGGKMENM (117 aa)) folds into the C2 domain. The segment at 151–299 (VPNGSALTDG…QQLPAAAQAP (149 aa)) is disordered. 2 stretches are compositionally biased toward polar residues: residues 152–171 (PNGS…SSGT) and 200–210 (SARTTPATGEQ). Residue S211 is modified to Phosphoserine. Polar residues-rich tracts occupy residues 222–243 (VKNS…TTAT) and 263–272 (VTPNPNTTSL). Over residues 290 to 299 (QQLPAAAQAP) the composition is skewed to low complexity. WW domains follow at residues 300–333 (DALP…RPLP), 330–363 (RPLP…RPTA), 405–437 (GPLP…DPRT), and 444–477 (PALP…DPRP). Residues 536–870 (KPYDLRRRLY…IEETEGFGQE (335 aa)) form the HECT domain. C838 (glycyl thioester intermediate) is an active-site residue.

Interacts with POU5F1, RBP1, EGR2 and SLC11A2. Interacts with SCNN1A, SCNN1B, SCNN1G, WBP1, WBP2 and ATN1. Interacts with ERBB4, NDFIP1 and NDFIP2. Interacts with ARRDC4. Interacts (via WW domains) with ARRDC1 (via PPxY motifs); ubiquitinates ARRDC1. Interacts (via WW domains) with ARRDC2 and ARRDC3. In terms of assembly, (Microbial infection) Interacts with adenovirus type 2 PIII. In terms of processing, autoubiquitinated. Ubiquitinated by the SCF(FBXL15) complex, leading to its degradation by the proteasome. In terms of tissue distribution, detected in heart, throughout the brain, placenta, lung, liver, muscle, kidney and pancreas. Also detected in spleen and peripheral blood leukocytes.

It is found in the nucleus. It catalyses the reaction S-ubiquitinyl-[E2 ubiquitin-conjugating enzyme]-L-cysteine + [acceptor protein]-L-lysine = [E2 ubiquitin-conjugating enzyme]-L-cysteine + N(6)-ubiquitinyl-[acceptor protein]-L-lysine.. It functions in the pathway protein modification; protein ubiquitination. Activated by NDFIP1- and NDFIP2-binding. In terms of biological role, E3 ubiquitin-protein ligase which accepts ubiquitin from an E2 ubiquitin-conjugating enzyme in the form of a thioester and then directly transfers the ubiquitin to targeted substrates. Polyubiquitinates POU5F1 by 'Lys-63'-linked conjugation and promotes it to proteasomal degradation; in embryonic stem cells (ESCs) the ubiquitination is proposed to regulate POU5F1 protein level. Ubiquitinates EGR2 and promotes it to proteasomal degradation; in T-cells the ubiquitination inhibits activation-induced cell death. Ubiquitinates SLC11A2; the ubiquitination is enhanced by presence of NDFIP1 and NDFIP2. Ubiquitinates RPB1 and promotes it to proteasomal degradation. This is NEDD4-like E3 ubiquitin-protein ligase WWP2 (WWP2) from Homo sapiens (Human).